Consider the following 296-residue polypeptide: D-alanine--D-alanine ligase (296 aa).

The 191-residue stretch at 103–293 (KEILMHHRMP…FDSFVKRIIE (191 aa)) folds into the ATP-grasp domain. Position 129-180 (129-180 (ISFPVAVKPSSGGSSIATFKVKSIQELKHAYEEASKYGEVMIEQWVTGKEIT)) interacts with ATP. Positions 247, 260, and 262 each coordinate Mg(2+).

Belongs to the D-alanine--D-alanine ligase family. The cofactor is Mg(2+). Mn(2+) is required as a cofactor.

Its subcellular location is the cytoplasm. The enzyme catalyses 2 D-alanine + ATP = D-alanyl-D-alanine + ADP + phosphate + H(+). It functions in the pathway cell wall biogenesis; peptidoglycan biosynthesis. In terms of biological role, cell wall formation. The sequence is that of D-alanine--D-alanine ligase from Francisella tularensis subsp. novicida (strain U112).